The primary structure comprises 164 residues: Cell division protein SepF (164 aa).

The tract at residues 29-57 (INKGRGASQQEYDEYYEDSTPTVTQKEDP) is disordered.

This sequence belongs to the SepF family. In terms of assembly, homodimer. Interacts with FtsZ.

Its subcellular location is the cytoplasm. Functionally, cell division protein that is part of the divisome complex and is recruited early to the Z-ring. Probably stimulates Z-ring formation, perhaps through the cross-linking of FtsZ protofilaments. Its function overlaps with FtsA. This Exiguobacterium sibiricum (strain DSM 17290 / CCUG 55495 / CIP 109462 / JCM 13490 / 255-15) protein is Cell division protein SepF.